The sequence spans 361 residues: Phospho-N-acetylmuramoyl-pentapeptide-transferase (361 aa).

The next 10 helical transmembrane spans lie at 25–45, 72–92, 95–115, 135–155, 169–189, 200–220, 240–260, 264–284, 289–309, and 338–358; these read TGGAMVTGALFVFMFGPWIID, TPTMGGLMILSGLTVGTVLWA, LNPYVWIVLAVTLGFGFVGFY, LLIEFIIAGAACFALVWLGRA, VMLNLGWAFVVFGAFVVVGAG, GLAIVPVMIAAASFGLISYLA, LAVLCGALLGAGLGFLWFNAP, IFMGDTGSLALGGMLGSIAVA, IVLAVIGGLFVLEAVSVIVQV, and QIVIRFWIIAVMLALAGLSTL.

This sequence belongs to the glycosyltransferase 4 family. MraY subfamily. The cofactor is Mg(2+).

The protein resides in the cell inner membrane. It carries out the reaction UDP-N-acetyl-alpha-D-muramoyl-L-alanyl-gamma-D-glutamyl-meso-2,6-diaminopimeloyl-D-alanyl-D-alanine + di-trans,octa-cis-undecaprenyl phosphate = di-trans,octa-cis-undecaprenyl diphospho-N-acetyl-alpha-D-muramoyl-L-alanyl-D-glutamyl-meso-2,6-diaminopimeloyl-D-alanyl-D-alanine + UMP. Its pathway is cell wall biogenesis; peptidoglycan biosynthesis. Functionally, catalyzes the initial step of the lipid cycle reactions in the biosynthesis of the cell wall peptidoglycan: transfers peptidoglycan precursor phospho-MurNAc-pentapeptide from UDP-MurNAc-pentapeptide onto the lipid carrier undecaprenyl phosphate, yielding undecaprenyl-pyrophosphoryl-MurNAc-pentapeptide, known as lipid I. This chain is Phospho-N-acetylmuramoyl-pentapeptide-transferase, found in Rhodopseudomonas palustris (strain TIE-1).